We begin with the raw amino-acid sequence, 327 residues long: MDLTQGFRARSGVVGPVAGLESLNFSDEFRHLVTTMPPETTGGSFTALLEMPVTQAMELLHFPDSSSSQARTVTSGDISPTTLHPFGALTFPSNSLLLDRAARFSVIATEQNGNFSGETANSLPSNPGANLDRVKAEPAETDSMVENQNQSYSSGKRKEREKKVKSSTKKNKSSVESDKLPYVHVRARRGQATDNHSLAERARREKINARMKLLQELVPGCDKIQGTALVLDEIINHVQTLQRQVEMLSMRLAAVNPRIDFNLDSILASENGSLMDGSFNAESYHQLQQWPFDGYHQPEWGREEDHHQANFSMGSATLHPNQVKMEL.

The segment at 137-179 is disordered; that stretch reads EPAETDSMVENQNQSYSSGKRKEREKKVKSSTKKNKSSVESDK. One can recognise a bHLH domain in the interval 191–241; sequence QATDNHSLAERARREKINARMKLLQELVPGCDKIQGTALVLDEIINHVQTL.

Homodimer. Expressed in leaves, stems, and flowers.

It localises to the nucleus. This chain is Transcription factor bHLH48 (BHLH48), found in Arabidopsis thaliana (Mouse-ear cress).